The following is a 452-amino-acid chain: Membrane-bound acylglycerophosphatidylinositol O-acyltransferase mboa-7 (452 aa).

Transmembrane regions (helical) follow at residues 4 to 24 (IIGLMSRDDWVYTGLLLFSFA), 53 to 73 (PRIAYSLGICAIAVGIQAFAP), 79 to 99 (FYVFLTTFTYLMFVRFAHYFL), and 104 to 124 (VASHTNVIQLIITLRIIGITF). An N-linked (GlcNAc...) asparagine glycan is attached at Asn-137. 3 helical membrane passes run 153-173 (FAYFYHFCGLFTGPYYTYQML), 220-240 (AIWEVSFFTRLVYAALIFVVF), and 244-264 (VYSAWAIAESICVILGIGIYP). A glycan (N-linked (GlcNAc...) asparagine) is linked at Asn-319. His-350 is an active-site residue. Residues 354-374 (AGYFMSFGVVAMCAILEDVIF) form a helical membrane-spanning segment. The N-linked (GlcNAc...) asparagine glycan is linked to Asn-414. The helical transmembrane segment at 421–441 (FWSSIYYWLPLLCVPFYIYSV) threads the bilayer.

Belongs to the membrane-bound acyltransferase family.

Its subcellular location is the membrane. It catalyses the reaction a 1-acyl-sn-glycero-3-phospho-(1D-myo-inositol) + an acyl-CoA = a 1,2-diacyl-sn-glycero-3-phospho-(1D-myo-inositol) + CoA. The enzyme catalyses a fatty acyl-[ACP] + a 1-acyl-sn-glycero-3-phosphate = a 1,2-diacyl-sn-glycero-3-phosphate + holo-[ACP]. It participates in lipid metabolism; phospholipid metabolism. In terms of biological role, acyltransferase which mediates the conversion of lysophosphatidylinositol (1-acylglycerophosphatidylinositol or LPI) into phosphatidylinositol (1,2-diacyl-sn-glycero-3-phosphoinositol or PI) (LPIAT activity). Prefers arachidonoyl-CoA or eicosapentaenoic acid (EPA) as the acyl donor. Prefers sn-2-LPI rather than sn-1-LPI as the acyl acceptor. Lysophospholipid acyltransferases (LPLATs) catalyze the reacylation step of the phospholipid remodeling pathway also known as the Lands cycle. In Caenorhabditis briggsae, this protein is Membrane-bound acylglycerophosphatidylinositol O-acyltransferase mboa-7.